Here is a 446-residue protein sequence, read N- to C-terminus: Mannan endo-1,6-alpha-mannosidase DCW1 (446 aa).

Residues 1 to 18 (MRLVTLLSGLVSLVSVFG) form the signal peptide. Residues N31, N81, N106, N200, N222, N237, N262, N278, N285, N334, N391, and N397 are each glycosylated (N-linked (GlcNAc...) asparagine). The interval 389-408 (PYNATNGGNSTGDGAAGTKP) is disordered. S422 carries GPI-anchor amidated serine lipidation. A propeptide spans 423–446 (RAGAGIITAIIGISIIACALWLVY) (removed in mature form).

This sequence belongs to the glycosyl hydrolase 76 family.

Its subcellular location is the secreted. The protein resides in the cell wall. It localises to the cell membrane. It carries out the reaction Random hydrolysis of (1-&gt;6)-alpha-D-mannosidic linkages in unbranched (1-&gt;6)-mannans.. Its function is as follows. Required for normal synthesis of the cell wall. This is Mannan endo-1,6-alpha-mannosidase DCW1 (DCW1) from Candida glabrata (strain ATCC 2001 / BCRC 20586 / JCM 3761 / NBRC 0622 / NRRL Y-65 / CBS 138) (Yeast).